Reading from the N-terminus, the 495-residue chain is Oxidoreductase AflY (495 aa).

Residues 1-22 (MGSHAPAVAGKPDPKKGPYQAT) are disordered.

Belongs to the questin oxidase family.

It functions in the pathway mycotoxin biosynthesis; aflatoxin biosynthesis. In terms of biological role, oxidoreductase; part of the gene cluster that mediates the biosynthesis of aflatoxins, a group of polyketide-derived furanocoumarins, and part of the most toxic and carcinogenic compounds among the known mycotoxins. The four major aflatoxins produced by A.parasiticus are aflatoxin B1 (AFB1), aflatoxin B2 (AFB2), aflatoxin G1 (AFG1) and aflatoxin G2 (AFG2). Within the aflatoxin pathway, the oxidoreductase aflY seems to be involved in the conversion of versicolorin A (VERA) to demethylsterigmatocystin (DMST), through probable Baeyer-Villiger oxidation required for the formation of the xanthone ring. The biosynthesis of aflatoxins begins with the norsolorinic acid synthase aflC that combines a hexanoyl starter unit produced by the fatty acid synthase aflA/aflB and 7 malonyl-CoA extender units to synthesize the precursor NOR. The second step is the conversion of NOR to averantin and requires the norsolorinic acid ketoreductase aflD, which catalyzes the dehydration of norsolorinic acid to form (1'S)-averantin. The norsolorinic acid reductases aflE and aflF may also play a role in the conversion of NOR to AVN. The cytochrome P450 monooxygenase aflG then catalyzes the hydroxylation of AVN to 5'hydroxyaverantin (HAVN). The next step is performed by the 5'-hydroxyaverantin dehydrogenase aflH that transforms HAVN to 5'-oxoaverantin (OAVN) which is further converted to averufin (AVF) by aflK that plays a dual role in the pathway, as a 5'-oxoaverantin cyclase that mediates conversion of 5'-oxoaverantin, as well as a versicolorin B synthase in a later step in the pathway. The averufin oxidase aflI catalyzes the conversion of AVF to versiconal hemiacetal acetate (VHA). VHA is then the substrate for the versiconal hemiacetal acetate esterase aflJ to yield versiconal (VAL). Versicolorin B synthase aflK then converts VAL to versicolorin B (VERB) by closing the bisfuran ring of aflatoxin which is required for DNA-binding, thus giving to aflatoxin its activity as a mutagen. Then, the activity of the versicolorin B desaturase aflL leads to versicolorin A (VERA). A branch point starts from VERB since it can also be converted to dihydrodemethylsterigmatocystin (DMDHST), probably also by aflL, VERA being a precursor for aflatoxins B1 and G1, and DMDHST for aflatoxins B2 and G2. Next, the versicolorin reductase aflM and the cytochrome P450 monooxygenase aflN are involved in conversion of VERA to demethylsterigmatocystin (DMST). AflX and aflY seem also involved in this step, through probable aflX-mediated epoxide ring-opening step following versicolorin A oxidation and aflY-mediated Baeyer-Villiger oxidation required for the formation of the xanthone ring. The methyltransferase aflO then leads to the modification of DMST to sterigmatocystin (ST), and of DMDHST to dihydrosterigmatocystin (DHST). Both ST and DHST are then substrates of the O-methyltransferase aflP to yield O-methylsterigmatocystin (OMST) and dihydro-O-methylsterigmatocystin (DHOMST), respectively. Finally OMST is converted to aflatoxins B1 and G1, and DHOMST to aflatoxins B2 and G2, via the action of several enzymes including O-methylsterigmatocystin oxidoreductase aflQ, the cytochrome P450 monooxygenase aflU, but also the NADH-dependent flavin oxidoreductase nadA which is specifically required for the synthesis of AFG1. The sequence is that of Oxidoreductase AflY from Aspergillus parasiticus (strain ATCC 56775 / NRRL 5862 / SRRC 143 / SU-1).